We begin with the raw amino-acid sequence, 479 residues long: MNTILAQQIASEGGVEAWMIAQQHKSLLRFLTCGSVDDGKSTLIGRLLHDTLQIYEDQLSSLHNDSKRHGTQGEKLDLALLVDGLQAEREQGITIDVAYRYFSTEKRKFIIADTPGHEQYTRNMATGASTCDLAILLIDARKGVLDQTRRHSFISTLLGIKHLVVAINKMDLVDYREETFARIREDYLTFAEQLPGDLDIRFVPLSALEGDNVAAQSANMRWYSGPTLLEVLETVDIQRAVDRQPMRFPVQYVNRPNPDFRGYAGTLASGSVKVGERIKVLPSGVESSVARIVTFDGDKEEVCAGEAITLVLNDDIDISRGDLLLAANETLAPARHAAIDVVWMAEQPLAPGQSYDVKLAGKKTRARIEAICYQIDINNLTQRDVESLPLNGIGLVEMTFDEPLALDIYQQNPVTGGLIFIDRLSNVTVGAGMVRELDERGATPPVEYSAFELELNALVRRHFPHWDARDLLGDKHGAA.

The tr-type G domain occupies lysine 25–arginine 239. Residues glycine 34–serine 41 are G1. Residue glycine 34–serine 41 participates in GTP binding. The G2 stretch occupies residues glycine 92–aspartate 96. A G3 region spans residues aspartate 113–glycine 116. GTP-binding positions include aspartate 113–histidine 117 and asparagine 168–aspartate 171. The tract at residues asparagine 168–aspartate 171 is G4. Positions serine 206–leucine 208 are G5.

It belongs to the TRAFAC class translation factor GTPase superfamily. Classic translation factor GTPase family. CysN/NodQ subfamily. In terms of assembly, heterodimer composed of CysD, the smaller subunit, and CysN.

It catalyses the reaction sulfate + ATP + H(+) = adenosine 5'-phosphosulfate + diphosphate. The protein operates within sulfur metabolism; hydrogen sulfide biosynthesis; sulfite from sulfate: step 1/3. Functionally, with CysD forms the ATP sulfurylase (ATPS) that catalyzes the adenylation of sulfate producing adenosine 5'-phosphosulfate (APS) and diphosphate, the first enzymatic step in sulfur assimilation pathway. APS synthesis involves the formation of a high-energy phosphoric-sulfuric acid anhydride bond driven by GTP hydrolysis by CysN coupled to ATP hydrolysis by CysD. This Salmonella typhi protein is Sulfate adenylyltransferase subunit 1.